A 643-amino-acid chain; its full sequence is uncharacterized protein (643 aa).

The segment covering 179–199 (FKSSQLQQSPSPNKKSPSYSQ) has biased composition (low complexity). Disordered regions lie at residues 179-200 (FKSS…YSQV) and 349-377 (KRSN…STEN).

This is an uncharacterized protein from Caenorhabditis elegans.